Here is a 363-residue protein sequence, read N- to C-terminus: Neutral protease 2 homolog MEP7 (363 aa).

The N-terminal stretch at 1 to 19 is a signal peptide; the sequence is MLLCSMVAALAALATPAFS. The propeptide occupies 20–181; the sequence is CALPHLDLPE…ARAIQPLDRR (162 aa). Intrachain disulfides connect Cys-187–Cys-259 and Cys-266–Cys-284. Zn(2+) is bound at residue His-308. The active site involves Glu-309. Positions 312 and 323 each coordinate Zn(2+).

It belongs to the peptidase M35 family. Zn(2+) is required as a cofactor.

It is found in the secreted. It carries out the reaction Preferential cleavage of bonds with hydrophobic residues in P1'. Also 3-Asn-|-Gln-4 and 8-Gly-|-Ser-9 bonds in insulin B chain.. In terms of biological role, secreted metalloproteinase that allows assimilation of proteinaceous substrates. Shows high activities on basic nuclear substrates such as histone and protamine. May be involved in virulence. The sequence is that of Neutral protease 2 homolog MEP7 (MEP7) from Coccidioides posadasii (strain C735) (Valley fever fungus).